A 101-amino-acid polypeptide reads, in one-letter code: Small ribosomal subunit protein uS10 (101 aa).

This sequence belongs to the universal ribosomal protein uS10 family. Part of the 30S ribosomal subunit.

In terms of biological role, involved in the binding of tRNA to the ribosomes. The protein is Small ribosomal subunit protein uS10 of Ureaplasma parvum serovar 3 (strain ATCC 27815 / 27 / NCTC 11736).